Here is a 159-residue protein sequence, read N- to C-terminus: Pathogenesis-related leaf protein 4 (159 aa).

An N-terminal signal peptide occupies residues Met-1–Ala-24. Gln-25 bears the Pyrrolidone carboxylic acid mark. The 116-residue stretch at Leu-32 to Tyr-147 folds into the SCP domain. Disulfide bonds link Cys-68–Cys-136, Cys-109–Cys-115, and Cys-131–Cys-145.

This sequence belongs to the CRISP family.

Functionally, probably involved in the defense reaction of plants against pathogens. The polypeptide is Pathogenesis-related leaf protein 4 (Solanum lycopersicum (Tomato)).